The sequence spans 247 residues: ABC-type transporter ATP-binding protein EcsA (247 aa).

The 231-residue stretch at 4 to 234 folds into the ABC transporter domain; that stretch reads LSVKDLTGGY…FGMKDAALDD (231 aa). 36–43 contributes to the ATP binding site; it reads GLNGAGKS.

This sequence belongs to the ABC transporter superfamily.

Has a role in exoprotein production, sporulation and competence. In Bacillus subtilis (strain 168), this protein is ABC-type transporter ATP-binding protein EcsA (ecsA).